We begin with the raw amino-acid sequence, 298 residues long: Rhodomycin D methylesterase DnrP (298 aa).

In terms of domain architecture, AB hydrolase-1 spans 25–277; the sequence is PLLLIAGGNL…VEIENMGHAL (253 aa).

This sequence belongs to the methyl esterase DnrP family.

It catalyses the reaction rhodomycin D + H2O = 10-carboxy-13-deoxycarminomycin + methanol + H(+). The catalysed reaction is 4-O-methylrhodomycin D + H2O = 10-carboxy-13-deoxydaunorubicin + methanol + H(+). Its pathway is antibiotic biosynthesis; daunorubicin biosynthesis. It participates in antibiotic biosynthesis; carminomycin biosynthesis. Involved in the biosynthesis of the anthracyclines carminomycin and daunorubicin (daunomycin) which are aromatic polyketide antibiotics that exhibit high cytotoxicity and are widely applied in the chemotherapy of a variety of cancers. Catalyzes the removal of methyl group from the carbomethoxy group of rhodomycin D (10-carbomethoxy-13-deoxycarminomycin) and 4-O-methylrhodomycin D to yield 10-carboxy-13-deoxycarminomycin and 10-carboxy-13-deoxydaunorubicin, respectively. Could be also involved in the decarboxylation of 10-carboxy-13-deoxycarminomycin and 10-carboxy-13-deoxydaunorubicin to yield 13-deoxycarminomycin and 13-deoxydaunorubicin, respectively. It seems that DnrK may influence the ability of DnrP to carry out the decarboxylation. This chain is Rhodomycin D methylesterase DnrP (dnrP), found in Streptomyces peucetius.